Reading from the N-terminus, the 547-residue chain is DNA polymerase kappa (547 aa).

The tract at residues 18–39 is disordered; that stretch reads LTIEDDGSSSSDEEATLKRRLA. Acidic residues predominate over residues 20–31; the sequence is IEDDGSSSSDEE. The UmuC domain maps to 132 to 316; sequence IVHVDCDAFY…LPVREVSGIG (185 aa). D136 and D226 together coordinate Mg(2+). The UBZ4-type zinc-finger motif lies at 489–518; the sequence is TVPCPVCQKNIENELGILNQHVDLCLNVET. C492, C495, H509, and C513 together coordinate Zn(2+).

As to quaternary structure, interacts with hus1 and rad17.

It localises to the cytoplasm. The protein resides in the nucleus. The catalysed reaction is DNA(n) + a 2'-deoxyribonucleoside 5'-triphosphate = DNA(n+1) + diphosphate. Functionally, DNA polymerase specifically involved in DNA repair. Plays an important role in translesion synthesis, where the normal high-fidelity DNA polymerases cannot proceed and DNA synthesis stalls. Has a role in meiosis. This is DNA polymerase kappa (mug40) from Schizosaccharomyces pombe (strain 972 / ATCC 24843) (Fission yeast).